Reading from the N-terminus, the 426-residue chain is Serine--tRNA ligase (426 aa).

Thr233–Glu235 contacts L-serine. Arg264–Glu266 contributes to the ATP binding site. Glu287 is an L-serine binding site. Glu351–Ser354 lines the ATP pocket. Residue Ser387 coordinates L-serine.

It belongs to the class-II aminoacyl-tRNA synthetase family. Type-1 seryl-tRNA synthetase subfamily. In terms of assembly, homodimer. The tRNA molecule binds across the dimer.

The protein localises to the cytoplasm. It catalyses the reaction tRNA(Ser) + L-serine + ATP = L-seryl-tRNA(Ser) + AMP + diphosphate + H(+). It carries out the reaction tRNA(Sec) + L-serine + ATP = L-seryl-tRNA(Sec) + AMP + diphosphate + H(+). It participates in aminoacyl-tRNA biosynthesis; selenocysteinyl-tRNA(Sec) biosynthesis; L-seryl-tRNA(Sec) from L-serine and tRNA(Sec): step 1/1. Functionally, catalyzes the attachment of serine to tRNA(Ser). Is also able to aminoacylate tRNA(Sec) with serine, to form the misacylated tRNA L-seryl-tRNA(Sec), which will be further converted into selenocysteinyl-tRNA(Sec). The polypeptide is Serine--tRNA ligase (Pseudomonas syringae pv. tomato (strain ATCC BAA-871 / DC3000)).